The primary structure comprises 139 residues: Putative nickel-responsive regulator (139 aa).

Residues H79, H90, H92, and C98 each coordinate Ni(2+).

It belongs to the transcriptional regulatory CopG/NikR family. It depends on Ni(2+) as a cofactor.

Its function is as follows. Transcriptional regulator. In Nitratidesulfovibrio vulgaris (strain DSM 19637 / Miyazaki F) (Desulfovibrio vulgaris), this protein is Putative nickel-responsive regulator.